Reading from the N-terminus, the 247-residue chain is Cell division protein ZapD (247 aa).

Belongs to the ZapD family. As to quaternary structure, interacts with FtsZ.

The protein resides in the cytoplasm. In terms of biological role, cell division factor that enhances FtsZ-ring assembly. Directly interacts with FtsZ and promotes bundling of FtsZ protofilaments, with a reduction in FtsZ GTPase activity. The sequence is that of Cell division protein ZapD from Escherichia coli O7:K1 (strain IAI39 / ExPEC).